Here is a 129-residue protein sequence, read N- to C-terminus: UPF0344 protein MW0851 (129 aa).

4 helical membrane-spanning segments follow: residues 1 to 21 (MLHL…ATYL), 36 to 56 (LHMI…WILI), 67 to 87 (MLLT…EVSI), and 99 to 119 (MFWI…ILPL).

This sequence belongs to the UPF0344 family.

It is found in the cell membrane. In Staphylococcus aureus (strain MW2), this protein is UPF0344 protein MW0851.